Here is a 379-residue protein sequence, read N- to C-terminus: ATP phosphoribosyltransferase regulatory subunit (379 aa).

The protein belongs to the class-II aminoacyl-tRNA synthetase family. HisZ subfamily. As to quaternary structure, heteromultimer composed of HisG and HisZ subunits.

The protein resides in the cytoplasm. Its pathway is amino-acid biosynthesis; L-histidine biosynthesis; L-histidine from 5-phospho-alpha-D-ribose 1-diphosphate: step 1/9. Functionally, required for the first step of histidine biosynthesis. May allow the feedback regulation of ATP phosphoribosyltransferase activity by histidine. The protein is ATP phosphoribosyltransferase regulatory subunit of Gluconobacter oxydans (strain 621H) (Gluconobacter suboxydans).